The following is a 795-amino-acid chain: Phenylalanine--tRNA ligase beta subunit (795 aa).

Positions 39–148 constitute a tRNA-binding domain; sequence AGDFSGVVVG…QNAPVGTNLR (110 aa). Positions 401–476 constitute a B5 domain; the sequence is PKLNQVSLRR…RIYGYNSIPN (76 aa). Mg(2+) is bound by residues aspartate 454, aspartate 460, glutamate 463, and glutamate 464. The FDX-ACB domain occupies 701-794; that stretch reads SRFPANRRDL…LKQRFNAYLR (94 aa).

The protein belongs to the phenylalanyl-tRNA synthetase beta subunit family. Type 1 subfamily. Tetramer of two alpha and two beta subunits. It depends on Mg(2+) as a cofactor.

It localises to the cytoplasm. It carries out the reaction tRNA(Phe) + L-phenylalanine + ATP = L-phenylalanyl-tRNA(Phe) + AMP + diphosphate + H(+). In Pasteurella multocida (strain Pm70), this protein is Phenylalanine--tRNA ligase beta subunit (pheT).